A 479-amino-acid chain; its full sequence is PRAME family member 18 (479 aa).

The stretch at 15-38 is one LRR 1 repeat; the sequence is QSLLRDQALAISVLDELPRELFPP. Residues 97 to 124 form an LRR 1; degenerate repeat; it reads RWKLQVLEMRDVDENFWTIWSGARLLSC. The LRR 2; degenerate repeat unit spans residues 179 to 203; sequence HLCCTKVVNYSMSILNFRNILETVY. An LRR 3; degenerate repeat occupies 204–230; the sequence is PDSIQVLEIWNMCWLCMIVEFSRYLSQ. The stretch at 231-265 is one LRR 4; degenerate repeat; sequence MRNLRKLFISDGCRYLLSSDSQEQLVAEFSSVLLR. LRR repeat units lie at residues 266 to 291, 292 to 323, 324 to 342, 348 to 375, and 376 to 400; these read LENLQMLYVRRVCFFRGHLDQLIRCL, RSPLETLALTYGFLEEEDLKCLPRYPSLSQLK, QLNLSHGALRFIRLEPLRA, AATLQTLFLVDCGIGYSKLRVILPALSR, and CSNLTTFCFHGNDTSMDALKDLLRH.

This sequence belongs to the PRAME family.

The chain is PRAME family member 18 from Homo sapiens (Human).